Here is a 294-residue protein sequence, read N- to C-terminus: Ethylene-inducing xylanase 3 (294 aa).

An N-terminal signal peptide occupies residues 1–19 (MVCFSSLFVAASAIAGVFA). The region spanning 31–226 (QSTPSSQGTH…SSGSARINVA (196 aa)) is the GH11 domain. Residue E122 is the Nucleophile of the active site. The active-site Proton donor is E213. A CBM1 domain is found at 259-294 (SCAARWGQCGGSGWNGATCCSAGTCQAQNQWYSQCL).

This sequence belongs to the glycosyl hydrolase 11 (cellulase G) family.

The catalysed reaction is Endohydrolysis of (1-&gt;4)-beta-D-xylosidic linkages in xylans.. Its pathway is glycan degradation; xylan degradation. Functionally, endo-1,4-beta-xylanase involved in the hydrolysis of xylan, a major structural heterogeneous polysaccharide found in plant biomass representing the second most abundant polysaccharide in the biosphere, after cellulose. Exhibits immunity-inducing activity in Nicotiana benthamiana. Can induce strong oxidative burst, activate the expression of defense-related genes, and increase resistance against oomycete and fungal pathogens in N.benthamiana. This chain is Ethylene-inducing xylanase 3, found in Verticillium dahliae (strain VdLs.17 / ATCC MYA-4575 / FGSC 10137) (Verticillium wilt).